We begin with the raw amino-acid sequence, 193 residues long: Thymidine kinase (193 aa).

ATP-binding positions include 16-23 and 89-92; these read GPMFSGKS and DEIQ. The active-site Proton acceptor is E90. Zn(2+) is bound by residues C146, C149, C184, and C187.

It belongs to the thymidine kinase family. In terms of assembly, homotetramer.

It is found in the cytoplasm. The catalysed reaction is thymidine + ATP = dTMP + ADP + H(+). In Caldanaerobacter subterraneus subsp. tengcongensis (strain DSM 15242 / JCM 11007 / NBRC 100824 / MB4) (Thermoanaerobacter tengcongensis), this protein is Thymidine kinase.